A 465-amino-acid chain; its full sequence is Hepatocyte nuclear factor 6 (465 aa).

Disordered stretches follow at residues 15 to 84 and 119 to 141; these read GVSH…GPLH and SDKF…HQRL. Basic residues predominate over residues 123 to 140; sequence PHHHHHHHHHHHPHHHQR. The CUT DNA-binding region spans 283–369; the sequence is GSNSGQMEEI…QRMSALRLAA (87 aa). A DNA-binding region (homeobox) is located at residues 385–444; sequence PKKPRLVFTDVQRRTLHAIFKENKRPSKELQITISQQLGLELSTVSNFFMNARRRSLDKW. The segment at 442–465 is disordered; sequence DKWQDEGSSNSGNSSSSSSTCTKA. Low complexity predominate over residues 448–465; that stretch reads GSSNSGNSSSSSSTCTKA.

Belongs to the CUT homeobox family. In terms of assembly, binds DNA as a monomer. Expressed in liver, brain, spleen and testis.

It localises to the nucleus. Functionally, transcriptional activator. Binds the consensus sequence 5'-DHWATTGAYTWWD-3' on a variety of gene promoters such as those of HNF3B and TTR. Important for liver genes transcription. The affinity of HNF-6-alpha and HNF-6-beta for DNA differs depending on the target sequence. This chain is Hepatocyte nuclear factor 6 (Onecut1), found in Rattus norvegicus (Rat).